Here is a 363-residue protein sequence, read N- to C-terminus: Dihydroorotate dehydrogenase (quinone) (363 aa).

Residues 67–71 (AGLDK) and Thr-91 each bind FMN. Residue Lys-71 participates in substrate binding. 116 to 120 (NRMGF) is a substrate binding site. Positions 145 and 178 each coordinate FMN. Substrate is bound at residue Asn-178. Ser-181 functions as the Nucleophile in the catalytic mechanism. A substrate-binding site is contributed by Asn-183. Lys-219 and Thr-247 together coordinate FMN. Substrate is bound at residue 248–249 (NT). Residues Gly-268, Gly-297, and 318 to 319 (YT) each bind FMN.

Belongs to the dihydroorotate dehydrogenase family. Type 2 subfamily. Monomer. The cofactor is FMN.

The protein resides in the cell membrane. It catalyses the reaction (S)-dihydroorotate + a quinone = orotate + a quinol. It participates in pyrimidine metabolism; UMP biosynthesis via de novo pathway; orotate from (S)-dihydroorotate (quinone route): step 1/1. Its function is as follows. Catalyzes the conversion of dihydroorotate to orotate with quinone as electron acceptor. The chain is Dihydroorotate dehydrogenase (quinone) from Myxococcus xanthus (strain DK1622).